The following is a 1051-amino-acid chain: Carbamoyl phosphate synthase large chain (1051 aa).

The segment at 1 to 399 (MRETPKKVLV…SLQKAIRMLD (399 aa)) is carboxyphosphate synthetic domain. Positions 127, 167, 173, 174, 206, 208, 213, 239, 240, 241, 282, and 296 each coordinate ATP. An ATP-grasp 1 domain is found at 131–325 (RETMIENNLP…LAYVSAKLAL (195 aa)). Mg(2+) is bound by residues Gln282, Glu296, and Asn298. Mn(2+) is bound by residues Gln282, Glu296, and Asn298. The tract at residues 400 to 548 (IGEPGVVGGK…LTYNGTEDDI (149 aa)) is oligomerization domain. The carbamoyl phosphate synthetic domain stretch occupies residues 549-930 (EFSQGNKLLI…LKSWLSSMPN (382 aa)). The region spanning 673–863 (SKLLDKLGIS…LINESMKAIF (191 aa)) is the ATP-grasp 2 domain. ATP is bound by residues Arg709, Lys748, Ile750, Glu755, Gly779, Val780, His781, Ser782, Gln822, and Glu834. Mg(2+) is bound by residues Gln822, Glu834, and Asn836. Residues Gln822, Glu834, and Asn836 each contribute to the Mn(2+) site. Residues 930–1051 (NRIPNKNGIA…FEISEYGGGI (122 aa)) form the MGS-like domain. The interval 931–1051 (RIPNKNGIAL…FEISEYGGGI (121 aa)) is allosteric domain.

Belongs to the CarB family. In terms of assembly, composed of two chains; the small (or glutamine) chain promotes the hydrolysis of glutamine to ammonia, which is used by the large (or ammonia) chain to synthesize carbamoyl phosphate. Tetramer of heterodimers (alpha,beta)4. Mg(2+) is required as a cofactor. The cofactor is Mn(2+).

The enzyme catalyses hydrogencarbonate + L-glutamine + 2 ATP + H2O = carbamoyl phosphate + L-glutamate + 2 ADP + phosphate + 2 H(+). It carries out the reaction hydrogencarbonate + NH4(+) + 2 ATP = carbamoyl phosphate + 2 ADP + phosphate + 2 H(+). The protein operates within amino-acid biosynthesis; L-arginine biosynthesis; carbamoyl phosphate from bicarbonate: step 1/1. It participates in pyrimidine metabolism; UMP biosynthesis via de novo pathway; (S)-dihydroorotate from bicarbonate: step 1/3. Functionally, large subunit of the glutamine-dependent carbamoyl phosphate synthetase (CPSase). CPSase catalyzes the formation of carbamoyl phosphate from the ammonia moiety of glutamine, carbonate, and phosphate donated by ATP, constituting the first step of 2 biosynthetic pathways, one leading to arginine and/or urea and the other to pyrimidine nucleotides. The large subunit (synthetase) binds the substrates ammonia (free or transferred from glutamine from the small subunit), hydrogencarbonate and ATP and carries out an ATP-coupled ligase reaction, activating hydrogencarbonate by forming carboxy phosphate which reacts with ammonia to form carbamoyl phosphate. In Saccharolobus solfataricus (strain ATCC 35092 / DSM 1617 / JCM 11322 / P2) (Sulfolobus solfataricus), this protein is Carbamoyl phosphate synthase large chain.